The primary structure comprises 155 residues: Small ribosomal subunit protein uS7cz/uS7cy (155 aa).

Belongs to the universal ribosomal protein uS7 family. As to quaternary structure, part of the 30S ribosomal subunit.

It is found in the plastid. The protein localises to the chloroplast. One of the primary rRNA binding proteins, it binds directly to 16S rRNA where it nucleates assembly of the head domain of the 30S subunit. The chain is Small ribosomal subunit protein uS7cz/uS7cy (rps7-A) from Phaseolus vulgaris (Kidney bean).